A 176-amino-acid polypeptide reads, in one-letter code: dCTP deaminase (176 aa).

DCTP-binding positions include 99-104 (RSTLAR) and aspartate 115. The Proton donor/acceptor role is filled by glutamate 125. Glutamine 163 provides a ligand contact to dCTP.

It belongs to the dCTP deaminase family. In terms of assembly, homotrimer.

The enzyme catalyses dCTP + H2O + H(+) = dUTP + NH4(+). It participates in pyrimidine metabolism; dUMP biosynthesis; dUMP from dCTP (dUTP route): step 1/2. Its function is as follows. Catalyzes the deamination of dCTP to dUTP. The sequence is that of dCTP deaminase from Pyrobaculum neutrophilum (strain DSM 2338 / JCM 9278 / NBRC 100436 / V24Sta) (Thermoproteus neutrophilus).